The sequence spans 267 residues: Large ribosomal subunit protein uL4 (267 aa).

Belongs to the universal ribosomal protein uL4 family. In terms of assembly, part of the 50S ribosomal subunit.

In terms of biological role, one of the primary rRNA binding proteins, this protein initially binds near the 5'-end of the 23S rRNA. It is important during the early stages of 50S assembly. It makes multiple contacts with different domains of the 23S rRNA in the assembled 50S subunit and ribosome. Its function is as follows. Forms part of the polypeptide exit tunnel. In Saccharolobus solfataricus (strain ATCC 35092 / DSM 1617 / JCM 11322 / P2) (Sulfolobus solfataricus), this protein is Large ribosomal subunit protein uL4.